Here is a 579-residue protein sequence, read N- to C-terminus: Protein inscuteable homolog (579 aa).

Residues 74-89 (SVQRWMEDLKLMTECE) form an important for interaction with GPSM2 region. The PDZ-binding motif lies at 576 to 579 (ESFV).

In terms of assembly, interacts with ALS2CR19/PAR3B and F2RL2/PAR3. Interacts with GPSM1/AGS3 and GPSM2/LGN (via TPR repeat region). Identified in a complex with GPSM2 and F2RL2. As to expression, isoform 1 is expressed in various tissues with stronger expression in liver, kidney and small intestine. Isoform 2 is abundantly expressed in small intestine and to a lower extent in lung and pancreas.

The protein localises to the cytoplasm. It is found in the cell cortex. Functionally, may function as an adapter linking the Par3 complex to the GPSM1/GPSM2 complex. Involved in spindle orientation during mitosis. May regulate cell proliferation and differentiation in the developing nervous system. May play a role in the asymmetric division of fibroblasts and participate in the process of stratification of the squamous epithelium. This chain is Protein inscuteable homolog (INSC), found in Homo sapiens (Human).